We begin with the raw amino-acid sequence, 177 residues long: UPF0200 protein STK_09500 (177 aa).

11 to 18 (GMPGSGKG) serves as a coordination point for ATP.

Belongs to the UPF0200 family.

In Sulfurisphaera tokodaii (strain DSM 16993 / JCM 10545 / NBRC 100140 / 7) (Sulfolobus tokodaii), this protein is UPF0200 protein STK_09500.